A 142-amino-acid polypeptide reads, in one-letter code: MAIIIGADKAGQELKEVIKDYLKEGKYEVVDVSENEVRDFVDTTLAVVKEVNASDDNLGIVIDAYGVGSFMVATKIKGMVAAEVSDERSAYMTRGHNNARIITLGSEISAPGIAKNIIKGFVEGKYDGGRHQVRVDMLNKMC.

It belongs to the LacAB/RpiB family. As to quaternary structure, heteromultimeric protein consisting of LacA and LacB.

The enzyme catalyses aldehydo-D-galactose 6-phosphate = keto-D-tagatose 6-phosphate. It functions in the pathway carbohydrate metabolism; D-galactose 6-phosphate degradation; D-tagatose 6-phosphate from D-galactose 6-phosphate: step 1/1. This is Galactose-6-phosphate isomerase subunit LacA 2 from Streptococcus pyogenes serotype M1.